A 310-amino-acid polypeptide reads, in one-letter code: Aspartate carbamoyltransferase catalytic subunit (310 aa).

2 residues coordinate carbamoyl phosphate: Arg58 and Thr59. Lys86 provides a ligand contact to L-aspartate. 3 residues coordinate carbamoyl phosphate: Arg108, His136, and Gln139. Residues Arg169 and Arg222 each coordinate L-aspartate. Residues Gly264 and Pro265 each contribute to the carbamoyl phosphate site.

It belongs to the aspartate/ornithine carbamoyltransferase superfamily. ATCase family. As to quaternary structure, heterododecamer (2C3:3R2) of six catalytic PyrB chains organized as two trimers (C3), and six regulatory PyrI chains organized as three dimers (R2).

The catalysed reaction is carbamoyl phosphate + L-aspartate = N-carbamoyl-L-aspartate + phosphate + H(+). Its pathway is pyrimidine metabolism; UMP biosynthesis via de novo pathway; (S)-dihydroorotate from bicarbonate: step 2/3. In terms of biological role, catalyzes the condensation of carbamoyl phosphate and aspartate to form carbamoyl aspartate and inorganic phosphate, the committed step in the de novo pyrimidine nucleotide biosynthesis pathway. This is Aspartate carbamoyltransferase catalytic subunit from Campylobacter fetus subsp. fetus (strain 82-40).